The following is a 126-amino-acid chain: Glycine cleavage system H protein (126 aa).

The region spanning 21-103 (TVTIGISEHA…YEGGWIVKVK (83 aa)) is the Lipoyl-binding domain. N6-lipoyllysine is present on Lys62.

Belongs to the GcvH family. In terms of assembly, the glycine cleavage system is composed of four proteins: P, T, L and H. The cofactor is (R)-lipoate.

The glycine cleavage system catalyzes the degradation of glycine. The H protein shuttles the methylamine group of glycine from the P protein to the T protein. This is Glycine cleavage system H protein from Vibrio vulnificus (strain CMCP6).